Here is a 305-residue protein sequence, read N- to C-terminus: Dihydroorotate dehydrogenase A (fumarate) (305 aa).

FMN-binding positions include Ser-21 and 45–46 (KS). Substrate contacts are provided by residues Lys-45, 69 to 73 (NAIGL), and Asn-129. Asn-129 contacts FMN. The Nucleophile role is filled by Cys-132. FMN-binding residues include Lys-167 and Ile-193. 194–195 (NT) provides a ligand contact to substrate. FMN-binding positions include Gly-219 and 245–246 (GG).

It belongs to the dihydroorotate dehydrogenase family. Type 1 subfamily. Homodimer. The cofactor is FMN.

It localises to the cytoplasm. It carries out the reaction (S)-dihydroorotate + fumarate = orotate + succinate. It functions in the pathway pyrimidine metabolism; UMP biosynthesis via de novo pathway. Its function is as follows. Catalyzes the conversion of dihydroorotate to orotate with fumarate as the electron acceptor. This is Dihydroorotate dehydrogenase A (fumarate) (pyrD) from Lactiplantibacillus plantarum (strain ATCC BAA-793 / NCIMB 8826 / WCFS1) (Lactobacillus plantarum).